The sequence spans 482 residues: Nicotine dehydrogenase (482 aa).

The segment at residues 1–38 (MSDKTKTNEGFSRRSFIGSAAVVTAGVAGLGAIDAASA) is a signal peptide (tat-type signal). Residues A64, E83, A84, R85, R91, W108, and V279 each coordinate FAD. T381 is a (S)-nicotine binding site. Residues A453, N462, and I463 each contribute to the FAD site.

This sequence belongs to the flavin monoamine oxidase family. In terms of assembly, monomer in solution. Homodimer in solution. Forms homodimers in the crystal. FAD is required as a cofactor. Post-translationally, predicted to be exported by the Tat system. The position of the signal peptide cleavage has not been experimentally proven.

The protein localises to the periplasm. It catalyses the reaction (S)-nicotine + 2 Fe(III)-[cytochrome c] = N-methylmyosmine + 2 Fe(II)-[cytochrome c] + 2 H(+). It participates in alkaloid degradation; nicotine degradation. With respect to regulation, the catalytic rate is not significantly affected by pH. In terms of biological role, involved in nicotine degradation. Catalyzes the conversion of nicotine to N-methylmyosmine. N-methylmyosmine undergoes spontaneous hydrolysis to form pseudooxynicotine (PN). S-nicotine is the optimal substrate. Has lower activity with some nicotine analogs, but shows no activity towards neurotransmitters, including serotonin, dopamine, and norepinephrine, nicotine metabolites and common neuroactive drugs. The enzyme is stereospecific with poor activity with (R)-nicotine as the substrate. The c-type cytochrome protein CycN is the physiological electron acceptor. O(2) is a poor electron acceptor. The sequence is that of Nicotine dehydrogenase from Pseudomonas putida (strain DSM 28022 / S16).